Reading from the N-terminus, the 846-residue chain is Aminopeptidase N (846 aa).

Substrate is bound by residues Glu120 and Gly252–Asn256. His288 lines the Zn(2+) pocket. Glu289 (proton acceptor) is an active-site residue. Positions 292 and 311 each coordinate Zn(2+).

It belongs to the peptidase M1 family. As to quaternary structure, monomer. Zn(2+) serves as cofactor.

It localises to the cytoplasm. The enzyme catalyses Release of an N-terminal amino acid, Xaa-|-Yaa- from a peptide, amide or arylamide. Xaa is preferably Ala, but may be most amino acids including Pro (slow action). When a terminal hydrophobic residue is followed by a prolyl residue, the two may be released as an intact Xaa-Pro dipeptide.. Functionally, aminopeptidase with broad substrate specificity to several peptides. It has more affinity for oligopeptides than for dipeptides. It plays an essential role in the metabolism, it may be involved in nitrogen supply or protein turnover. This Lactococcus lactis subsp. lactis (strain IL1403) (Streptococcus lactis) protein is Aminopeptidase N (pepN).